We begin with the raw amino-acid sequence, 972 residues long: Fibroblast growth factor receptor (972 aa).

Positions 1–43 (MSLPRCPRTRTVMFSRTLTRCYPQRTLWIAILCVICSWTLSTA) are cleaved as a signal peptide. Topologically, residues 44 to 547 (GATTIRDKEV…NNMQPTSKTQ (504 aa)) are extracellular. The 96-residue stretch at 57 to 152 (APQDLTAIPV…YIEASGTPPI (96 aa)) folds into the Fibronectin type-III domain. N-linked (GlcNAc...) asparagine glycans are attached at residues N109, N121, N191, N203, N239, N272, N315, N390, N398, N419, N422, and N460. Residues 150–242 (PPIPPTLRRN…GQPIHVNFTL (93 aa)) form the Ig-like C2-type 1 domain. C176 and C226 are oxidised to a cystine. Ig-like C2-type domains follow at residues 282–374 (PRFT…YDVK) and 383–517 (PIMS…AYLD). C306 and C358 are oxidised to a cystine. C403 and C501 are disulfide-bonded. A helical transmembrane segment spans residues 548–568 (LIIFSVVGFVVVLILVTCIAI). At 569 to 972 (LCKQTQVRHR…QTRDCCPYAN (404 aa)) the chain is on the cytoplasmic side. Positions 639–925 (LTVGKTIGEG…ISVSSNQDYL (287 aa)) constitute a Protein kinase domain. ATP contacts are provided by residues 645–653 (IGEGAFGKV) and K673. The active-site Proton acceptor is D781. Y812 is modified (phosphotyrosine; by autocatalysis).

The protein belongs to the protein kinase superfamily. Tyr protein kinase family. Fibroblast growth factor receptor subfamily.

It localises to the membrane. It catalyses the reaction L-tyrosyl-[protein] + ATP = O-phospho-L-tyrosyl-[protein] + ADP + H(+). Its function is as follows. Receptor for basic fibroblast growth factor. The chain is Fibroblast growth factor receptor (FGFR) from Strongylocentrotus purpuratus (Purple sea urchin).